We begin with the raw amino-acid sequence, 189 residues long: Adenylate kinase (189 aa).

10–15 (GAGKGT) lines the ATP pocket. The segment at 30–59 (STGDIFRANVSGGTELGKKAQAYMDRGDLV) is NMP. Residues threonine 31, arginine 36, 57–59 (DLV), 85–88 (GFPR), and glutamine 92 contribute to the AMP site. The LID stretch occupies residues 126-136 (ERARIDNRSDD). Arginine 127 provides a ligand contact to ATP. AMP contacts are provided by arginine 133 and arginine 144. Residue glycine 172 participates in ATP binding.

It belongs to the adenylate kinase family. As to quaternary structure, monomer.

It localises to the cytoplasm. It carries out the reaction AMP + ATP = 2 ADP. It functions in the pathway purine metabolism; AMP biosynthesis via salvage pathway; AMP from ADP: step 1/1. In terms of biological role, catalyzes the reversible transfer of the terminal phosphate group between ATP and AMP. Plays an important role in cellular energy homeostasis and in adenine nucleotide metabolism. This chain is Adenylate kinase, found in Thermobifida fusca (strain YX).